A 146-amino-acid polypeptide reads, in one-letter code: Snaclec stejaggregin-B subunit beta-2 (146 aa).

A signal peptide spans 1–23 (MGRFIFVSFGLLVVFLSLSGSGA). The 112-residue stretch at 32 to 143 (YDLYCYRVFQ…CSQTYPFVCK (112 aa)) folds into the C-type lectin domain. Intrachain disulfides connect Cys-53-Cys-142 and Cys-119-Cys-134.

Belongs to the snaclec family. Heteromultimer; disulfide-linked. As to expression, expressed by the venom gland.

The protein localises to the secreted. Functionally, interferes with one step of hemostasis (modulation of platelet aggregation, or coagulation cascade, for example). In Trimeresurus stejnegeri (Chinese green tree viper), this protein is Snaclec stejaggregin-B subunit beta-2.